The sequence spans 487 residues: RCC1 repeat-containing protein DDB_G0284033 (487 aa).

RCC1 repeat units lie at residues 66 to 127 (SNKV…FSGY), 207 to 259 (RSLI…ALSN), 260 to 313 (DGKL…ALTS), 373 to 426 (NGNI…IVET), and 428 to 483 (DGRF…SLNS).

The chain is RCC1 repeat-containing protein DDB_G0284033 from Dictyostelium discoideum (Social amoeba).